Reading from the N-terminus, the 325-residue chain is Beta-ketoacyl-[acyl-carrier-protein] synthase III (325 aa).

Active-site residues include Cys-116 and His-252. Positions 253-257 (QANLR) are ACP-binding. Residue Asn-282 is part of the active site.

Belongs to the thiolase-like superfamily. FabH family. Homodimer.

The protein localises to the cytoplasm. It catalyses the reaction malonyl-[ACP] + acetyl-CoA + H(+) = 3-oxobutanoyl-[ACP] + CO2 + CoA. It functions in the pathway lipid metabolism; fatty acid biosynthesis. Functionally, catalyzes the condensation reaction of fatty acid synthesis by the addition to an acyl acceptor of two carbons from malonyl-ACP. Catalyzes the first condensation reaction which initiates fatty acid synthesis and may therefore play a role in governing the total rate of fatty acid production. Possesses both acetoacetyl-ACP synthase and acetyl transacylase activities. Its substrate specificity determines the biosynthesis of branched-chain and/or straight-chain of fatty acids. The protein is Beta-ketoacyl-[acyl-carrier-protein] synthase III of Xanthomonas campestris pv. campestris (strain ATCC 33913 / DSM 3586 / NCPPB 528 / LMG 568 / P 25).